The sequence spans 549 residues: Adhesion G protein-coupled receptor G3 (549 aa).

Positions Met1–Gly20 are cleaved as a signal peptide. Over Gln21–Arg270 the chain is Extracellular. N-linked (GlcNAc...) asparagine glycans are attached at residues Asn98, Asn144, and Asn210. Positions Phe107 to Gln262 constitute a GAIN-B domain. Cystine bridges form between Cys215/Cys244 and Cys233/Cys246. Residues Cys215 to Gln262 form a GPS region. Residues Phe251 to Thr259 are stachel. Residues Ile271–Leu295 form a helical membrane-spanning segment. The Cytoplasmic portion of the chain corresponds to Ser296–Asp304. Residues Ala305–Asn326 traverse the membrane as a helical segment. The Extracellular portion of the chain corresponds to Val327–Cys338. Cys338 and Cys420 are disulfide-bonded. The helical transmembrane segment at Trp339–Tyr364 threads the bilayer. The Cytoplasmic portion of the chain corresponds to Leu365–Tyr378. A helical transmembrane segment spans residues Phe379–Ala400. Over Asn401–Met428 the chain is Extracellular. Residue Asn413 is glycosylated (N-linked (GlcNAc...) asparagine). The helical transmembrane segment at Tyr429–Val454 threads the bilayer. At Trp455–Lys474 the chain is on the cytoplasmic side. A helical membrane pass occupies residues Lys475–Phe495. The Extracellular portion of the chain corresponds to Thr496–Ser501. A helical transmembrane segment spans residues Thr502–Tyr525. Asn510 provides a ligand contact to cortisol. Topologically, residues Leu526–Glu549 are cytoplasmic.

Belongs to the G-protein coupled receptor 2 family. Adhesion G-protein coupled receptor (ADGR) subfamily. Heterodimer of 2 chains generated by proteolytic processing; the large extracellular N-terminal fragment and the membrane-bound C-terminal fragment predominantly remain associated and non-covalently linked. Interacts with PRTN3; this interaction induces the activation of PAR2. Interacts with GNAO1 (when palmitoylated). In terms of processing, autoproteolytically processed at the GPS region of the GAIN-B domain; this cleavage modulates receptor activity. Post-translationally, O- and N-glycosylated. As to expression, expressed in cultured primary dermal lymphatic endothelial cells. Highly expressed in polymorphonuclear cells (PMNs) including neutrophilic, eosinophilic, and basophilic granulocytes.

It is found in the cell membrane. With respect to regulation, forms a heterodimer of 2 chains generated by proteolytic processing that remain associated through non-covalent interactions mediated by the GAIN-B domain. In the inactivated receptor, the Stachel sequence (also named stalk) is embedded in the GAIN-B domain, where it adopts a beta-strand conformation. On activation, the Stachel moves into the 7 transmembrane region and adopts a twisted hook-shaped configuration that forms contacts within the receptor, leading to coupling of a G-alpha protein, which activates signaling. The cleaved GAIN-B and N-terminal domains can then dissociate from the rest of the receptor. Adhesion G-protein coupled receptor (aGPCR) for glucocorticoid hormones such as cortisol, cortisone and 11-deoxycortisol. Ligand binding causes a conformation change that triggers signaling via guanine nucleotide-binding proteins (G proteins) and modulates the activity of downstream effectors, such as adenylate cyclase. ADGRG3/GPR97 is coupled to G(o)/GNAO1 G proteins and mediates signaling by inhibiting adenylate cyclase activity. May also signal through G-alpha(q)-proteins; additional evidence are however required to confirm this result in vivo. Plays a role in the regulation of various processes including B-cell development, inflammation or innate immunity. Regulates migration of lymphatic endothelial cells in vitro via the small GTPases RhoA and CDC42. Antibody ligation leads to the production and activation of antimicrobial mediators like reactive oxygen species (ROS) and myeloperoxidase (MPO) as well as enhanced bacteria uptake and killing by granulocytes. Additionally, collaborates with protease-activated receptor 2/PAR2 to stimulate neutrophil-driven antimicrobial responses and endothelial cell activation. This chain is Adhesion G protein-coupled receptor G3, found in Homo sapiens (Human).